We begin with the raw amino-acid sequence, 398 residues long: 4-hydroxy-3-methylbut-2-en-1-yl diphosphate synthase (ferredoxin) (398 aa).

Residues cysteine 306, cysteine 309, cysteine 340, and glutamate 347 each contribute to the [4Fe-4S] cluster site.

Belongs to the IspG family. [4Fe-4S] cluster is required as a cofactor.

It carries out the reaction (2E)-4-hydroxy-3-methylbut-2-enyl diphosphate + 2 oxidized [2Fe-2S]-[ferredoxin] + H2O = 2-C-methyl-D-erythritol 2,4-cyclic diphosphate + 2 reduced [2Fe-2S]-[ferredoxin] + H(+). Its pathway is isoprenoid biosynthesis; isopentenyl diphosphate biosynthesis via DXP pathway; isopentenyl diphosphate from 1-deoxy-D-xylulose 5-phosphate: step 5/6. Functionally, converts 2C-methyl-D-erythritol 2,4-cyclodiphosphate (ME-2,4cPP) into 1-hydroxy-2-methyl-2-(E)-butenyl 4-diphosphate. The polypeptide is 4-hydroxy-3-methylbut-2-en-1-yl diphosphate synthase (ferredoxin) (Synechococcus sp. (strain CC9311)).